The sequence spans 2907 residues: Fibrillin-2 (2907 aa).

Residues Met-1–Gly-28 form the signal peptide. The tract at residues Thr-26–Phe-58 is disordered. A propeptide spanning residues Gln-29–Arg-77 is cleaved from the precursor. A compositionally biased stretch (pro residues) spans Pro-30–Gln-46. EGF-like domains lie at Ile-111–Gly-142, Ser-145–Gly-176, and Gly-176–Glu-208. Cystine bridges form between Cys-115–Cys-124, Cys-119–Cys-130, Cys-132–Cys-141, Cys-149–Cys-159, Cys-153–Cys-164, Cys-166–Cys-175, Cys-180–Cys-190, Cys-184–Cys-196, and Cys-198–Cys-207. The segment at Cys-149 to Ile-359 is interaction with MFAP4. The TB 1 domain occupies Gly-214–Ile-266. The region spanning Asp-276–Glu-317 is the EGF-like 4; calcium-binding domain. 6 disulfide bridges follow: Cys-280–Cys-292, Cys-287–Cys-301, Cys-303–Cys-316, Cys-322–Cys-334, Cys-329–Cys-343, and Cys-345–Cys-358. The O-linked (Glc) serine glycan is linked to Ser-298. The region spanning Asp-318 to Ile-359 is the EGF-like 5; calcium-binding domain. An O-linked (Glc) serine glycan is attached at Ser-340. The 54-residue stretch at Gly-364–Cys-417 folds into the TB 2 domain. Asn-485 carries an N-linked (GlcNAc...) asparagine glycan. The region spanning Thr-487–Ile-527 is the EGF-like 6 domain. 15 disulfides stabilise this stretch: Cys-491–Cys-503, Cys-498–Cys-512, Cys-514–Cys-526, Cys-532–Cys-542, Cys-537–Cys-551, Cys-553–Cys-566, Cys-572–Cys-584, Cys-579–Cys-593, Cys-595–Cys-608, Cys-614–Cys-625, Cys-620–Cys-634, Cys-636–Cys-649, Cys-655–Cys-666, Cys-661–Cys-675, and Cys-677–Cys-690. Ser-509 carries an O-linked (Glc) serine glycan. Positions Asp-528–Ile-567 constitute an EGF-like 7; calcium-binding domain. O-linked (Glc) serine glycosylation is present at Ser-548. The EGF-like 8; calcium-binding domain maps to Asp-568–Val-609. The O-linked (Glc) serine glycan is linked to Ser-590. The EGF-like 9; calcium-binding domain maps to Asp-610 to Thr-650. O-linked (Glc) serine glycosylation is present at Ser-631. The EGF-like 10; calcium-binding domain occupies Asp-651 to Val-691. Ser-672 carries O-linked (Glc) serine glycosylation. Residues Ser-697–Cys-749 form the TB 3 domain. An EGF-like 11; calcium-binding domain is found at Asp-761–Ile-802. 9 cysteine pairs are disulfide-bonded: Cys-765-Cys-777, Cys-772-Cys-786, Cys-788-Cys-801, Cys-807-Cys-819, Cys-814-Cys-828, Cys-830-Cys-843, Cys-849-Cys-859, Cys-854-Cys-868, and Cys-870-Cys-883. The region spanning Asp-803–Glu-844 is the EGF-like 12; calcium-binding domain. An O-linked (Glc) serine glycan is attached at Ser-825. The 39-residue stretch at Asp-845–Cys-883 folds into the EGF-like 13; calcium-binding domain. Ser-865 carries an O-linked (Glc) serine glycan. Residues Gly-889–Arg-940 form the TB 4 domain. In terms of domain architecture, EGF-like 14; calcium-binding spans Asp-948–Leu-989. Disulfide bonds link Cys-952/Cys-964, Cys-959/Cys-973, and Cys-975/Cys-988. An O-linked (Glc) serine glycan is attached at Ser-970. The 52-residue stretch at Glu-994–Cys-1045 folds into the TB 5 domain. Positions Asp-1066 to Thr-1107 constitute an EGF-like 15; calcium-binding domain. 36 cysteine pairs are disulfide-bonded: Cys-1070–Cys-1082, Cys-1077–Cys-1091, Cys-1093–Cys-1106, Cys-1112–Cys-1124, Cys-1119–Cys-1133, Cys-1135–Cys-1149, Cys-1155–Cys-1167, Cys-1162–Cys-1176, Cys-1178–Cys-1191, Cys-1197–Cys-1209, Cys-1204–Cys-1218, Cys-1220–Cys-1233, Cys-1239–Cys-1250, Cys-1246–Cys-1259, Cys-1261–Cys-1274, Cys-1280–Cys-1292, Cys-1287–Cys-1301, Cys-1303–Cys-1316, Cys-1322–Cys-1334, Cys-1329–Cys-1343, Cys-1345–Cys-1358, Cys-1364–Cys-1377, Cys-1371–Cys-1386, Cys-1388–Cys-1399, Cys-1405–Cys-1418, Cys-1412–Cys-1427, Cys-1429–Cys-1440, Cys-1446–Cys-1458, Cys-1453–Cys-1467, Cys-1469–Cys-1482, Cys-1488–Cys-1499, Cys-1494–Cys-1508, Cys-1510–Cys-1523, Cys-1529–Cys-1540, Cys-1535–Cys-1549, and Cys-1551–Cys-1564. O-linked (Glc) serine glycosylation occurs at Ser-1088. An N-linked (GlcNAc...) asparagine glycan is attached at Asn-1105. In terms of domain architecture, EGF-like 16; calcium-binding spans Asp-1108 to Met-1150. Residues Asp-1151 to Val-1192 enclose the EGF-like 17; calcium-binding domain. O-linked (Glc) serine glycosylation is present at Ser-1173. Residues Asp-1193 to Thr-1234 form the EGF-like 18; calcium-binding domain. A glycan (O-linked (Glc) threonine) is linked at Thr-1215. An EGF-like 19; calcium-binding domain is found at Asp-1235–Ala-1275. Ser-1256 carries O-linked (Glc) serine glycosylation. Residues Asp-1276–Ile-1317 form the EGF-like 20; calcium-binding domain. The region spanning Asp-1318–Thr-1359 is the EGF-like 21; calcium-binding domain. A glycan (O-linked (Glc) serine) is linked at Ser-1340. Residues Asp-1360–Ile-1400 form the EGF-like 22; calcium-binding domain. The O-linked (Glc) serine glycan is linked to Ser-1383. Positions Asp-1401–Ser-1441 constitute an EGF-like 23; calcium-binding domain. Residue Asn-1407 is glycosylated (N-linked (GlcNAc...) asparagine). Positions Asp-1442–Gln-1483 constitute an EGF-like 24; calcium-binding domain. Residues Asp-1484 to Thr-1524 enclose the EGF-like 25; calcium-binding domain. A glycan (N-linked (GlcNAc...) asparagine) is linked at Asn-1522. An EGF-like 26; calcium-binding domain is found at Asp-1525–Val-1565. In terms of domain architecture, TB 6 spans Gly-1570 to Cys-1626. Asn-1618 carries an N-linked (GlcNAc...) asparagine glycan. Positions Asp-1643–Glu-1684 constitute an EGF-like 27; calcium-binding domain. Disulfide bonds link Cys-1647-Cys-1659, Cys-1654-Cys-1668, Cys-1670-Cys-1683, Cys-1689-Cys-1701, Cys-1696-Cys-1710, and Cys-1712-Cys-1725. Residue Ser-1665 is glycosylated (O-linked (Glc) serine). Positions Asp-1685–Met-1726 constitute an EGF-like 28; calcium-binding domain. N-linked (GlcNAc...) asparagine glycosylation occurs at Asn-1707. The interaction with MFAP4 stretch occupies residues Met-1728 to Asp-2164. Residues Ser-1731–Cys-1784 enclose the TB 7 domain. Residues Asn-1738 and Asn-1749 are each glycosylated (N-linked (GlcNAc...) asparagine). An EGF-like 29; calcium-binding domain is found at Asp-1801–Glu-1842. Disulfide bonds link Cys-1805–Cys-1817, Cys-1812–Cys-1826, Cys-1828–Cys-1841, Cys-1847–Cys-1860, Cys-1854–Cys-1869, Cys-1871–Cys-1883, Cys-1889–Cys-1901, Cys-1896–Cys-1910, Cys-1912–Cys-1925, Cys-1931–Cys-1941, Cys-1936–Cys-1950, Cys-1952–Cys-1964, Cys-1970–Cys-1983, Cys-1978–Cys-1992, Cys-1994–Cys-2007, Cys-2013–Cys-2025, Cys-2020–Cys-2034, Cys-2036–Cys-2047, Cys-2053–Cys-2065, Cys-2060–Cys-2074, and Cys-2076–Cys-2089. One can recognise an EGF-like 30; calcium-binding domain in the interval Asp-1843–Val-1884. A glycan (O-linked (Glc) serine) is linked at Ser-1866. Residues Asp-1885–Met-1926 form the EGF-like 31; calcium-binding domain. The 39-residue stretch at Asp-1927–Leu-1965 folds into the EGF-like 32; calcium-binding domain. N-linked (GlcNAc...) asparagine glycosylation occurs at Asn-1938. An O-linked (Glc) serine glycan is attached at Ser-1947. Residues Asp-1966–Ile-2008 form the EGF-like 33; calcium-binding domain. Ser-1989 is a glycosylation site (O-linked (Glc) serine). The EGF-like 34; calcium-binding domain occupies Asp-2009–Ile-2048. Positions Asp-2049–Phe-2090 constitute an EGF-like 35; calcium-binding domain. The 54-residue stretch at Ser-2095–Cys-2148 folds into the TB 8 domain. The N-linked (GlcNAc...) asparagine glycan is linked to Asn-2113. An EGF-like 36; calcium-binding domain is found at Asp-2164–Val-2205. 15 cysteine pairs are disulfide-bonded: Cys-2168–Cys-2180, Cys-2175–Cys-2189, Cys-2191–Cys-2204, Cys-2210–Cys-2221, Cys-2216–Cys-2230, Cys-2232–Cys-2244, Cys-2250–Cys-2261, Cys-2257–Cys-2270, Cys-2272–Cys-2285, Cys-2291–Cys-2305, Cys-2298–Cys-2314, Cys-2316–Cys-2329, Cys-2335–Cys-2347, Cys-2342–Cys-2356, and Cys-2358–Cys-2371. Ser-2186 is a glycosylation site (O-linked (Glc) serine). In terms of domain architecture, EGF-like 37; calcium-binding spans Asp-2206 to Glu-2245. A glycan (N-linked (GlcNAc...) asparagine) is linked at Asn-2218. Residues Asp-2246–Lys-2286 enclose the EGF-like 38; calcium-binding domain. O-linked (Glc) serine glycosylation occurs at Ser-2267. The 44-residue stretch at Asp-2287–Val-2330 folds into the EGF-like 39; calcium-binding domain. In terms of domain architecture, EGF-like 40; calcium-binding spans Asp-2331–Leu-2372. O-linked (Glc) serine glycosylation occurs at Ser-2353. Positions Gly-2377 to Cys-2430 constitute a TB 9 domain. The region spanning Asp-2442 to Val-2483 is the EGF-like 41; calcium-binding domain. Cystine bridges form between Cys-2446-Cys-2458, Cys-2453-Cys-2467, Cys-2469-Cys-2482, Cys-2488-Cys-2499, Cys-2495-Cys-2508, Cys-2510-Cys-2523, Cys-2529-Cys-2540, Cys-2536-Cys-2549, Cys-2551-Cys-2562, Cys-2568-Cys-2581, Cys-2575-Cys-2590, Cys-2592-Cys-2605, Cys-2611-Cys-2621, Cys-2617-Cys-2630, Cys-2632-Cys-2645, Cys-2651-Cys-2662, Cys-2657-Cys-2671, Cys-2673-Cys-2686, Cys-2692-Cys-2703, Cys-2699-Cys-2712, and Cys-2714-Cys-2726. A glycan (O-linked (Glc) serine) is linked at Ser-2464. The EGF-like 42; calcium-binding domain maps to Asp-2484 to Lys-2524. Residue Ser-2505 is glycosylated (O-linked (Glc) serine). The EGF-like 43; calcium-binding domain occupies Asp-2525–Ile-2563. Residues Asp-2564 to Glu-2606 enclose the EGF-like 44; calcium-binding domain. The O-linked (Glc) serine glycan is linked to Ser-2587. Positions Asp-2607–Val-2646 constitute an EGF-like 45; calcium-binding domain. The EGF-like 46; calcium-binding domain occupies Asp-2647–His-2687. Ser-2668 carries O-linked (Glc) serine glycosylation. Residues Asp-2688–Val-2727 form the EGF-like 47; calcium-binding domain. Asn-2803 is a glycosylation site (N-linked (GlcNAc...) asparagine).

This sequence belongs to the fibrillin family. In terms of assembly, interacts with BMP2, BMP4, BMP7, BMP10 and GDF5. Interacts with MFAP2 and MFAP5. Interacts with ADAMTSL5. Interacts with MFAP4. In terms of processing, N-glycosylated. Post-translationally, O-glycosylated on serine residues by POGLUT2 and POGLUT3. Widely expressed.

It is found in the secreted. The protein resides in the extracellular space. The protein localises to the extracellular matrix. Functionally, fibrillins are structural components of 10-12 nm extracellular calcium-binding microfibrils, which occur either in association with elastin or in elastin-free bundles. Fibrillin-2-containing microfibrils regulate the early process of elastic fiber assembly. Regulates osteoblast maturation by controlling TGF-beta bioavailability and calibrating TGF-beta and BMP levels, respectively. Hormone secreted by trophoblasts that promotes trophoblast invasiveness. Has glucogenic activity: is able to increase plasma glucose levels. The chain is Fibrillin-2 from Mus musculus (Mouse).